A 586-amino-acid polypeptide reads, in one-letter code: Proline--tRNA ligase (586 aa).

The protein belongs to the class-II aminoacyl-tRNA synthetase family. ProS type 1 subfamily. Homodimer.

Its subcellular location is the cytoplasm. The enzyme catalyses tRNA(Pro) + L-proline + ATP = L-prolyl-tRNA(Pro) + AMP + diphosphate. Catalyzes the attachment of proline to tRNA(Pro) in a two-step reaction: proline is first activated by ATP to form Pro-AMP and then transferred to the acceptor end of tRNA(Pro). As ProRS can inadvertently accommodate and process non-cognate amino acids such as alanine and cysteine, to avoid such errors it has two additional distinct editing activities against alanine. One activity is designated as 'pretransfer' editing and involves the tRNA(Pro)-independent hydrolysis of activated Ala-AMP. The other activity is designated 'posttransfer' editing and involves deacylation of mischarged Ala-tRNA(Pro). The misacylated Cys-tRNA(Pro) is not edited by ProRS. The sequence is that of Proline--tRNA ligase from Leptospira biflexa serovar Patoc (strain Patoc 1 / Ames).